Reading from the N-terminus, the 445-residue chain is Acetylcholine-gated chloride channel subunit acc-2 (445 aa).

Residues 1-26 (MIFTLLSTLPVLIITTELDYSELVHS) form the signal peptide. Over 27–258 (AELVSSSSYI…LHVTIIFERR (232 aa)) the chain is Extracellular. N-linked (GlcNAc...) asparagine glycans are attached at residues asparagine 46, asparagine 59, asparagine 121, and asparagine 162. Cysteine 177 and cysteine 191 form a disulfide bridge. The N-linked (GlcNAc...) asparagine glycan is linked to asparagine 218. A helical transmembrane segment spans residues 259-279 (FIWYFMQAYLPTYLTIFISWI). The Cytoplasmic portion of the chain corresponds to 280–286 (SFSLGSR). Residues 287–307 (AIPARTMLGVNSLLAIVFSFG) form a helical membrane-spanning segment. The Extracellular portion of the chain corresponds to 308 to 326 (NIMRNLPRVSYIKGIDVWM). A helical transmembrane segment spans residues 327–347 (LVSMTFIFCSLLELAIVGFMV). The Cytoplasmic portion of the chain corresponds to 348–407 (RDETVAKKKQQKKISGNISREESPHGIISERRFMFPPGCSESSKSLSSCTSGWTPERIDS). Residues 408–428 (ISSVMFPFSFFVFNIIYWFYY) form a helical membrane-spanning segment. The Extracellular portion of the chain corresponds to 429–445 (IHRKEIIKQNLINRVDG).

The protein belongs to the ligand-gated ion channel (TC 1.A.9) family. Homopentamer (in vitro). May interact with either acc-3 or acc-4; the interactions do not result in significant heteropentameric ion channel activity. As to expression, expressed in RIA, RIG, PHA and AIZ glutamatergic neurons, URX and RIH cholinergic neurons, and in male-specific MCM neurons.

The protein resides in the cell membrane. Functionally, acetylcholine-gated chloride channel subunit. Currents in channels are triggered in response to acetylcholine. Channel properties may be modulated by the formation of homomeric and heteromeric channels. The chain is Acetylcholine-gated chloride channel subunit acc-2 from Caenorhabditis elegans.